Here is a 236-residue protein sequence, read N- to C-terminus: (5-formylfuran-3-yl)methyl phosphate synthase (236 aa).

The Schiff-base intermediate with substrate role is filled by Lys27. Lys85 acts as the Proton acceptor in catalysis.

Belongs to the MfnB family.

It catalyses the reaction 2 D-glyceraldehyde 3-phosphate = 4-(hydroxymethyl)-2-furancarboxaldehyde phosphate + phosphate + 2 H2O. The protein operates within cofactor biosynthesis; methanofuran biosynthesis. Its function is as follows. Catalyzes the formation of 4-(hydroxymethyl)-2-furancarboxaldehyde phosphate (4-HFC-P) from two molecules of glyceraldehyde-3-P (GA-3-P). The protein is (5-formylfuran-3-yl)methyl phosphate synthase of Methanococcus maripaludis (strain C5 / ATCC BAA-1333).